Here is a 172-residue protein sequence, read N- to C-terminus: Photosystem I assembly protein Ycf3 (172 aa).

TPR repeat units lie at residues 35 to 68, 72 to 105, and 120 to 153; these read AFSYYRDGMSAQSEGEYAEALENYYEALRLEEDP, SYILYNIGLIYASNGEYVKALEYYHQALDLNSQL, and GVKASEKKELDLARTLFDKAAEYWKQAIRLSPNN.

The protein belongs to the Ycf3 family.

Its subcellular location is the plastid. The protein resides in the chloroplast thylakoid membrane. Functionally, essential for the assembly of the photosystem I (PSI) complex. May act as a chaperone-like factor to guide the assembly of the PSI subunits. This is Photosystem I assembly protein Ycf3 from Guillardia theta (Cryptophyte).